Consider the following 330-residue polypeptide: Aspartate--ammonia ligase (330 aa).

The protein belongs to the class-II aminoacyl-tRNA synthetase family. AsnA subfamily.

It is found in the cytoplasm. It carries out the reaction L-aspartate + NH4(+) + ATP = L-asparagine + AMP + diphosphate + H(+). It functions in the pathway amino-acid biosynthesis; L-asparagine biosynthesis; L-asparagine from L-aspartate (ammonia route): step 1/1. The protein is Aspartate--ammonia ligase of Aeromonas salmonicida (strain A449).